A 276-amino-acid polypeptide reads, in one-letter code: Octanoyltransferase LipM (276 aa).

One can recognise a BPL/LPL catalytic domain in the interval 33 to 247 (GELKPTLRFY…GFKDAFSLTF (215 aa)). Cys150 serves as the catalytic Acyl-thioester intermediate.

The protein belongs to the octanoyltransferase LipM family. Monomer.

The enzyme catalyses octanoyl-[ACP] + L-lysyl-[protein] = N(6)-octanoyl-L-lysyl-[protein] + holo-[ACP] + H(+). Its pathway is protein modification; protein lipoylation via endogenous pathway; protein N(6)-(lipoyl)lysine from octanoyl-[acyl-carrier-protein]. Functionally, catalyzes the transfer of endogenously produced octanoic acid from octanoyl-acyl-carrier-protein onto the lipoyl domain of GcvH, an intermediate carrier during protein lipoylation. This is Octanoyltransferase LipM from Exiguobacterium sp. (strain ATCC BAA-1283 / AT1b).